A 673-amino-acid polypeptide reads, in one-letter code: MSKPFKLNSAFKPSGDQPEAIRRLEEGLEDGLAHQTLLGVTGSGKTFTIANVIADLQRPTMVLAPNKTLAAQLYGEMKEFFPDNAVEYFVSYYDYYQPEAYVPSSDTFIEKDASVNEHIEQMRLSATKALLERRDVVVVASVSAIYGLGDPDLYLKMMLHLTVGMIIDQRAILRRLAELQYTRNDQAFQRGTFRVRGEVIDIFPAESDDIALRVELFDEEVERLSLFDPLTGQVESTIQRYTIYPKTHYVTPRERIVQAMEEIKDELVDRRRIMQENNKLLEEQRLTQRTQFDLEMMNELGYCSGIENYSRYLSGRGPGEPPPTLFDYLPADGLLVVDESHVTIPQIGGMFRGDRARKETLVEYGFRLPSALDNRPLKFEEFEALAPQTIYVSATPGNYELEKSGGEVVDQVVRPTGLLDPIIEVRPVATQVDDLLSEIRLRAAINERVLVTTLTKRMAEDLTEYLEEHGERVRYLHSDIDTVERMEIIRDLRLGEFDVLVGINLLREGLDMPEVSLVAILDADKEGFLRSERSLIQTIGRAARNVNGKAILYGDKITPSMAKAIGETERRREKQQLYNEEHGIVPQGLNKKVVDILALGQNIAKTKAKGKGKSRAAAKSGVVEMDMTPKALQQKIHELEGQMMQHAQNLEFEEAAEIRDQLHQLRELFIAAS.

The 158-residue stretch at 26-183 (EGLEDGLAHQ…RRLAELQYTR (158 aa)) folds into the Helicase ATP-binding domain. 39–46 (GVTGSGKT) lines the ATP pocket. The Beta-hairpin motif lies at 92 to 115 (YYDYYQPEAYVPSSDTFIEKDASV). A Helicase C-terminal domain is found at 431–597 (QVDDLLSEIR…GLNKKVVDIL (167 aa)). The UVR domain maps to 633-668 (QQKIHELEGQMMQHAQNLEFEEAAEIRDQLHQLREL).

It belongs to the UvrB family. As to quaternary structure, forms a heterotetramer with UvrA during the search for lesions. Interacts with UvrC in an incision complex.

The protein resides in the cytoplasm. In terms of biological role, the UvrABC repair system catalyzes the recognition and processing of DNA lesions. A damage recognition complex composed of 2 UvrA and 2 UvrB subunits scans DNA for abnormalities. Upon binding of the UvrA(2)B(2) complex to a putative damaged site, the DNA wraps around one UvrB monomer. DNA wrap is dependent on ATP binding by UvrB and probably causes local melting of the DNA helix, facilitating insertion of UvrB beta-hairpin between the DNA strands. Then UvrB probes one DNA strand for the presence of a lesion. If a lesion is found the UvrA subunits dissociate and the UvrB-DNA preincision complex is formed. This complex is subsequently bound by UvrC and the second UvrB is released. If no lesion is found, the DNA wraps around the other UvrB subunit that will check the other stand for damage. This is UvrABC system protein B from Citrobacter koseri (strain ATCC BAA-895 / CDC 4225-83 / SGSC4696).